The sequence spans 229 residues: Uracil-DNA glycosylase (229 aa).

Catalysis depends on Asp-64, which acts as the Proton acceptor.

It belongs to the uracil-DNA glycosylase (UDG) superfamily. UNG family. In terms of assembly, monomer.

The protein resides in the cytoplasm. It catalyses the reaction Hydrolyzes single-stranded DNA or mismatched double-stranded DNA and polynucleotides, releasing free uracil.. In terms of biological role, excises uracil residues from the DNA which can arise as a result of misincorporation of dUMP residues by DNA polymerase or due to deamination of cytosine. This is Uracil-DNA glycosylase from Escherichia coli O157:H7.